The chain runs to 447 residues: Phosphoglucosamine mutase (447 aa).

S101 acts as the Phosphoserine intermediate in catalysis. Residues S101, D242, D244, and D246 each contribute to the Mg(2+) site. S101 bears the Phosphoserine mark.

Belongs to the phosphohexose mutase family. The cofactor is Mg(2+). In terms of processing, activated by phosphorylation.

It catalyses the reaction alpha-D-glucosamine 1-phosphate = D-glucosamine 6-phosphate. In terms of biological role, catalyzes the conversion of glucosamine-6-phosphate to glucosamine-1-phosphate. The protein is Phosphoglucosamine mutase of Xanthobacter autotrophicus (strain ATCC BAA-1158 / Py2).